Reading from the N-terminus, the 431-residue chain is MSLRTSYSVRSSTSQVPVSQVSIKRTTNVPTYRAASIYGGAGGQGTRISSASYSGVRSGLGVPSMSSSIQVSASGSTGEIMGNEKMAMQNLNDRLASYLEKVRILEQANSKLELKIREALEKRGPDVHDYSRFQPIVDELRKKIFDATTNNARLVLQIDNARLAADDFRVKYESELSIRQGVEADITGLRKVIDDTNLNRMNLESEIEALKEELIFLKKNHDNEVMELRNQISQSGVQVDVDAPKGQDLSQIMEEIRAKYEKMALKNQEELKAWHESQITEVQVQVTQNTEALQGARSEVNELRRQIQTLEIELESQKNLKGSLEGTLRDTEMRYNMEIENLNTIILQLEAELTQLRGNIQHQTQEYEALLNIKMKLEAEIATYRRLLDGGDFKLQDALEEQKKVKVMTVTQTLVDGKVVSSSTETKERKL.

A head region spans residues 2 to 83 (SLRTSYSVRS…SGSTGEIMGN (82 aa)). Residue S12 is modified to Phosphoserine. T13 bears the Phosphothreonine mark. Residues S22 and S36 each carry the phosphoserine modification. The segment at 84–119 (EKMAMQNLNDRLASYLEKVRILEQANSKLELKIREA) is coil 1A. The IF rod domain maps to 84–395 (EKMAMQNLND…RLLDGGDFKL (312 aa)). The tract at residues 120–136 (LEKRGPDVHDYSRFQPI) is linker 1. The tract at residues 137–228 (VDELRKKIFD…KNHDNEVMEL (92 aa)) is coil 1B. The segment at 229–252 (RNQISQSGVQVDVDAPKGQDLSQI) is linker 12. Positions 253 to 390 (MEEIRAKYEK…IATYRRLLDG (138 aa)) are coil 2. The segment at 391 to 431 (GDFKLQDALEEQKKVKVMTVTQTLVDGKVVSSSTETKERKL) is tail.

The protein belongs to the intermediate filament family. In terms of assembly, heterotetramer of two type I and two type II keratins. Keratin-18 associates with keratin-8. In terms of processing, proteolytically cleaved by caspases during epithelial cell apoptosis. In terms of tissue distribution, expressed in simple epithelia such as intestinal mucosa, bile duct, hepatocytes, renal tubules, endothelia, ocular lens epithelium, and in a variety of mesenchymally-derived cells such as blood vessel endothelia, pillar gill cells, optic nerve glial cells, fibroblasts, interstitial cells, chondrocytes and ovarian theca cells. Also expressed in epidermis, pharyngeal mucosa, mucosa of anterior esophagus, gill mucosa and cornea.

Functionally, when phosphorylated, plays a role in filament reorganization. This is Keratin, type I cytoskeletal 18 from Danio rerio (Zebrafish).